A 520-amino-acid polypeptide reads, in one-letter code: GMP synthase [glutamine-hydrolyzing] (520 aa).

Positions 13-205 (KIIVLDYGSQ…ALNICKAKGD (193 aa)) constitute a Glutamine amidotransferase type-1 domain. Cys90 serves as the catalytic Nucleophile. Active-site residues include His179 and Glu181. The 190-residue stretch at 206–395 (WSMDNFIDMQ…LGMPDHIVWR (190 aa)) folds into the GMPS ATP-PPase domain. 233–239 (SGGVDSS) lines the ATP pocket.

In terms of assembly, homodimer.

It catalyses the reaction XMP + L-glutamine + ATP + H2O = GMP + L-glutamate + AMP + diphosphate + 2 H(+). The protein operates within purine metabolism; GMP biosynthesis; GMP from XMP (L-Gln route): step 1/1. Catalyzes the synthesis of GMP from XMP. This chain is GMP synthase [glutamine-hydrolyzing], found in Streptococcus pneumoniae serotype 2 (strain D39 / NCTC 7466).